A 752-amino-acid chain; its full sequence is Glutamate carboxypeptidase 2 (752 aa).

Residues 1–19 lie on the Cytoplasmic side of the membrane; sequence MWNAQQDSDSAEALGRRQR. Ser10 carries the phosphoserine modification. A helical; Signal-anchor for type II membrane protein transmembrane segment spans residues 20–44; sequence WFCAGTLVLAFTGTFIIGFLFGWFI. The Extracellular segment spans residues 45–752; it reads KPSNDSTSSV…AAAETLREVD (708 aa). Residues Asn48, Asn78, Asn123, Asn155, and Asn197 are each glycosylated (N-linked (GlcNAc...) asparagine). Substrate is bound by residues Arg212 and Asn259. Ca(2+)-binding residues include Thr271 and Tyr274. Residues 276–589 are NAALADase; sequence ANEYAYRHEF…QVRGAMVFEL (314 aa). Asn338 is a glycosylation site (N-linked (GlcNAc...) asparagine). His379 and Asp389 together coordinate Zn(2+). Glu426 provides a ligand contact to substrate. The active-site Nucleophile; for NAALADase activity is the Glu426. Glu427 lines the Zn(2+) pocket. Glu435 and Glu438 together coordinate Ca(2+). Asp455 is a binding site for Zn(2+). 2 N-linked (GlcNAc...) asparagine glycosylation sites follow: Asn461 and Asn478. Substrate-binding positions include 519 to 520, Asn521, 536 to 538, Tyr554, and 554 to 555; these read SG, RAR, and YH. Residue His555 participates in Zn(2+) binding. N-linked (GlcNAc...) asparagine glycosylation is present at Asn615. Residue Ser630 is the Charge relay system of the active site. N-linked (GlcNAc...) asparagine glycosylation occurs at Asn640. Catalysis depends on charge relay system residues Asp668 and His691. 701–702 is a binding site for substrate; it reads KY.

This sequence belongs to the peptidase M28 family. M28B subfamily. In terms of assembly, homodimer. Zn(2+) serves as cofactor. As to expression, widely expressed throughout brain regions with highest levels in the hippocampus, dentate gyrus, priform cortex, choroid plexus of ventricles, pineal gland, anterior lobe of the pituitary gland and supraoptic nucleus. High levels also found in the cerebral cortex, substantia nigra, pontine nucleus and the granule cell layer of cerebellum. Highly expressed in astrocytes and non-myelinating Schwann cells. Also expressed in kidney, localizing to the proximal brush border of the renal tube.

Its subcellular location is the cell membrane. It carries out the reaction Release of an unsubstituted, C-terminal glutamyl residue, typically from Ac-Asp-Glu or folylpoly-gamma-glutamates.. With respect to regulation, the NAALADase activity is inhibited by beta-NAAG, quisqualic acid and 2-(phosphonomethyl)glutaric acid (PMG). Functionally, has both folate hydrolase and N-acetylated-alpha-linked-acidic dipeptidase (NAALADase) activity. Has a preference for tri-alpha-glutamate peptides. In the intestine, required for the uptake of folate. In the brain, modulates excitatory neurotransmission through the hydrolysis of the neuropeptide, N-aceylaspartylglutamate (NAAG), thereby releasing glutamate. Its function is as follows. Also exhibits a dipeptidyl-peptidase IV type activity. In vitro, cleaves Gly-Pro-AMC. This is Glutamate carboxypeptidase 2 (Folh1) from Rattus norvegicus (Rat).